The sequence spans 179 residues: Ribosome maturation factor RimM (179 aa).

Residues 100–176 (KEEFHLLELI…FLIINPPNGL (77 aa)) form the PRC barrel domain.

This sequence belongs to the RimM family. In terms of assembly, binds ribosomal protein uS19.

It is found in the cytoplasm. In terms of biological role, an accessory protein needed during the final step in the assembly of 30S ribosomal subunit, possibly for assembly of the head region. Essential for efficient processing of 16S rRNA. May be needed both before and after RbfA during the maturation of 16S rRNA. It has affinity for free ribosomal 30S subunits but not for 70S ribosomes. The protein is Ribosome maturation factor RimM of Prochlorococcus marinus (strain AS9601).